The following is a 151-amino-acid chain: Chaperonin GroEL (151 aa).

41–45 (DGTTT) serves as a coordination point for ATP.

This sequence belongs to the chaperonin (HSP60) family. As to quaternary structure, forms a cylinder of 14 subunits composed of two heptameric rings stacked back-to-back. Interacts with the co-chaperonin GroES.

It is found in the cytoplasm. It catalyses the reaction ATP + H2O + a folded polypeptide = ADP + phosphate + an unfolded polypeptide.. In terms of biological role, together with its co-chaperonin GroES, plays an essential role in assisting protein folding. The GroEL-GroES system forms a nano-cage that allows encapsulation of the non-native substrate proteins and provides a physical environment optimized to promote and accelerate protein folding. This Mycobacterium avium protein is Chaperonin GroEL.